Reading from the N-terminus, the 132-residue chain is D-ribose pyranase (132 aa).

H20 serves as the catalytic Proton donor. Substrate-binding positions include D28, H99, and 121 to 123; that span reads YSN.

The protein belongs to the RbsD / FucU family. RbsD subfamily. Homodecamer.

The protein resides in the cytoplasm. The catalysed reaction is beta-D-ribopyranose = beta-D-ribofuranose. The protein operates within carbohydrate metabolism; D-ribose degradation; D-ribose 5-phosphate from beta-D-ribopyranose: step 1/2. Functionally, catalyzes the interconversion of beta-pyran and beta-furan forms of D-ribose. The protein is D-ribose pyranase of Lactococcus lactis subsp. cremoris (strain MG1363).